Consider the following 827-residue polypeptide: Periplasmic nitrate reductase (827 aa).

Residues 1–32 constitute a signal peptide (tat-type signal); that stretch reads MELNRRDFMKANAAMAAAAAAGMTIPVKNVYA. The 4Fe-4S Mo/W bis-MGD-type domain maps to 37 to 93; that stretch reads IRWDKAPCRFCGTGCSVLVGTKDGRVVATQGDPDAEVNRGLNCIKGYFLSKIMYGAD. 4 residues coordinate [4Fe-4S] cluster: cysteine 44, cysteine 47, cysteine 51, and cysteine 79. Residues lysine 81, glutamine 148, asparagine 173, cysteine 177, 210–217, 241–245, methionine 371, glutamine 375, asparagine 481, 507–508, lysine 530, aspartate 557, and 717–726 contribute to the Mo-bis(molybdopterin guanine dinucleotide) site; these read WGSNMAEM, STFEH, SD, and TGRVLEHWHT. Phenylalanine 793 contacts substrate. Positions 801 and 818 each coordinate Mo-bis(molybdopterin guanine dinucleotide).

The protein belongs to the prokaryotic molybdopterin-containing oxidoreductase family. NasA/NapA/NarB subfamily. In terms of assembly, component of the periplasmic nitrate reductase NapAB complex composed of NapA and NapB. It depends on [4Fe-4S] cluster as a cofactor. The cofactor is Mo-bis(molybdopterin guanine dinucleotide). In terms of processing, predicted to be exported by the Tat system. The position of the signal peptide cleavage has not been experimentally proven.

Its subcellular location is the periplasm. It catalyses the reaction 2 Fe(II)-[cytochrome] + nitrate + 2 H(+) = 2 Fe(III)-[cytochrome] + nitrite + H2O. Functionally, catalytic subunit of the periplasmic nitrate reductase complex NapAB. Receives electrons from NapB and catalyzes the reduction of nitrate to nitrite. This Actinobacillus pleuropneumoniae serotype 7 (strain AP76) protein is Periplasmic nitrate reductase.